The chain runs to 233 residues: Octanoyltransferase (233 aa).

Residues 32 to 213 (NNIDGILLLL…NFKMIFETDL (182 aa)) form the BPL/LPL catalytic domain. Substrate contacts are provided by residues 77-84 (RGGNVTYH), 144-146 (AIG), and 157-159 (GFA). Cys175 functions as the Acyl-thioester intermediate in the catalytic mechanism.

This sequence belongs to the LipB family.

It localises to the cytoplasm. It carries out the reaction octanoyl-[ACP] + L-lysyl-[protein] = N(6)-octanoyl-L-lysyl-[protein] + holo-[ACP] + H(+). It functions in the pathway protein modification; protein lipoylation via endogenous pathway; protein N(6)-(lipoyl)lysine from octanoyl-[acyl-carrier-protein]: step 1/2. In terms of biological role, catalyzes the transfer of endogenously produced octanoic acid from octanoyl-acyl-carrier-protein onto the lipoyl domains of lipoate-dependent enzymes. Lipoyl-ACP can also act as a substrate although octanoyl-ACP is likely to be the physiological substrate. In Clostridium kluyveri (strain ATCC 8527 / DSM 555 / NBRC 12016 / NCIMB 10680 / K1), this protein is Octanoyltransferase.